Consider the following 32-residue polypeptide: IRRYCDPRVCDRECLEKGKYFGRCIRDICKCN.

Disulfide bonds link Cys-5-Cys-24, Cys-10-Cys-29, and Cys-14-Cys-31.

Belongs to the short scorpion toxin superfamily. Potassium channel inhibitor family. Alpha-KTx 10 subfamily. As to expression, expressed by the venom gland.

Its subcellular location is the secreted. The polypeptide is Peptide II.10.10 (Centruroides tecomanus (Scorpion)).